A 398-amino-acid polypeptide reads, in one-letter code: 1-deoxy-D-xylulose 5-phosphate reductoisomerase (398 aa).

The NADPH site is built by Thr-10, Gly-11, Ser-12, Ile-13, and Asn-124. Lys-125 serves as a coordination point for 1-deoxy-D-xylulose 5-phosphate. Glu-126 is an NADPH binding site. A Mn(2+)-binding site is contributed by Asp-150. 1-deoxy-D-xylulose 5-phosphate-binding residues include Ser-151, Glu-152, Ser-186, and His-209. Residue Glu-152 participates in Mn(2+) binding. Gly-215 provides a ligand contact to NADPH. 1-deoxy-D-xylulose 5-phosphate contacts are provided by Ser-222, Asn-227, Lys-228, and Glu-231. Glu-231 serves as a coordination point for Mn(2+).

It belongs to the DXR family. It depends on Mg(2+) as a cofactor. Requires Mn(2+) as cofactor.

It carries out the reaction 2-C-methyl-D-erythritol 4-phosphate + NADP(+) = 1-deoxy-D-xylulose 5-phosphate + NADPH + H(+). It participates in isoprenoid biosynthesis; isopentenyl diphosphate biosynthesis via DXP pathway; isopentenyl diphosphate from 1-deoxy-D-xylulose 5-phosphate: step 1/6. Catalyzes the NADPH-dependent rearrangement and reduction of 1-deoxy-D-xylulose-5-phosphate (DXP) to 2-C-methyl-D-erythritol 4-phosphate (MEP). The chain is 1-deoxy-D-xylulose 5-phosphate reductoisomerase from Tolumonas auensis (strain DSM 9187 / NBRC 110442 / TA 4).